The primary structure comprises 299 residues: Sodium/potassium-transporting ATPase subunit beta-2 (299 aa).

The Cytoplasmic segment spans residues 1–36 (MAALTQKKTCSQMMEEWKEFMWNPRTREFMGRTGSS). The chain crosses the membrane as a helical; Signal-anchor for type II membrane protein span at residues 37 to 57 (WALILLFYVVFYAFLTAVFSL). Residues 58–299 (SLWVMLQTID…VIFTMKIDRL (242 aa)) are Extracellular-facing. Residues Asn101 and Asn119 are each glycosylated (N-linked (GlcNAc...) asparagine). Disulfide bonds link Cys130/Cys152 and Cys162/Cys178. N-linked (GlcNAc...) asparagine glycosylation is found at Asn199, Asn226, Asn247, and Asn259. The cysteines at positions 206 and 270 are disulfide-linked.

The protein belongs to the X(+)/potassium ATPases subunit beta family. In terms of assembly, the sodium/potassium-transporting ATPase is composed of a catalytic alpha subunit, an auxiliary non-catalytic beta subunit and an additional regulatory subunit. In terms of tissue distribution, expressed at a high level in bladder epithelial cells and eye and at a trace level in kidney; it is not detectable in significant amounts in the stomach, colon and small intestine.

It is found in the cell membrane. This is the non-catalytic component of the active enzyme, which catalyzes the hydrolysis of ATP coupled with the exchange of Na(+) and K(+) ions across the plasma membrane. The exact function of this glycoprotein is not known. Some specific sequence of the beta subunit can modulate the activation of the Na,K-pump by extracellular potassium ions. This is Sodium/potassium-transporting ATPase subunit beta-2 from Rhinella marina (Cane toad).